The following is a 611-amino-acid chain: DNA mismatch repair protein MutL (611 aa).

This sequence belongs to the DNA mismatch repair MutL/HexB family.

Functionally, this protein is involved in the repair of mismatches in DNA. It is required for dam-dependent methyl-directed DNA mismatch repair. May act as a 'molecular matchmaker', a protein that promotes the formation of a stable complex between two or more DNA-binding proteins in an ATP-dependent manner without itself being part of a final effector complex. This Borrelia garinii subsp. bavariensis (strain ATCC BAA-2496 / DSM 23469 / PBi) (Borreliella bavariensis) protein is DNA mismatch repair protein MutL.